Reading from the N-terminus, the 168-residue chain is Photosystem I assembly protein Ycf3 (168 aa).

3 TPR repeats span residues 29–62, 66–99, and 117–150; these read AFSY…EEDP, SYTL…NANL, and AQSL…APDN.

This sequence belongs to the Ycf3 family.

It is found in the plastid. Its subcellular location is the chloroplast thylakoid membrane. In terms of biological role, essential for the assembly of the photosystem I (PSI) complex. May act as a chaperone-like factor to guide the assembly of the PSI subunits. The polypeptide is Photosystem I assembly protein Ycf3 (Phaeodactylum tricornutum (strain CCAP 1055/1)).